The chain runs to 1059 residues: Endo-1,4-beta-xylanase A (1059 aa).

The first 30 residues, 1 to 30 (MQVRKRRGLLDVSTAVLVGILAGFLGVVLA), serve as a signal peptide directing secretion. Residues 47-199 (SSLETVLALS…LDKVQVLAPK (153 aa)) are A-1. The A-2 stretch occupies residues 200–354 (ESGPKVIYET…DDVKIVDTTS (155 aa)). One can recognise a GH10 domain in the interval 364–692 (EKEIPALKEV…KLAYWAIVAP (329 aa)). The active-site Proton donor is the Glu-502. The active-site Nucleophile is the Glu-608. CBM-cenC domains lie at 700-870 (KESR…LEGI) and 871-1059 (MVAT…RLIK).

Belongs to the glycosyl hydrolase 10 (cellulase F) family.

It carries out the reaction Endohydrolysis of (1-&gt;4)-beta-D-xylosidic linkages in xylans.. The sequence is that of Endo-1,4-beta-xylanase A (xynA) from Thermotoga maritima (strain ATCC 43589 / DSM 3109 / JCM 10099 / NBRC 100826 / MSB8).